A 303-amino-acid polypeptide reads, in one-letter code: N-acetylmuramic acid 6-phosphate etherase (303 aa).

Residues Met-1–Ile-21 are disordered. The 164-residue stretch at Ala-58 to Lys-221 folds into the SIS domain. Glu-86 (proton donor) is an active-site residue. Glu-117 is a catalytic residue.

It belongs to the GCKR-like family. MurNAc-6-P etherase subfamily. Homodimer.

The catalysed reaction is N-acetyl-D-muramate 6-phosphate + H2O = N-acetyl-D-glucosamine 6-phosphate + (R)-lactate. It functions in the pathway amino-sugar metabolism; N-acetylmuramate degradation. Specifically catalyzes the cleavage of the D-lactyl ether substituent of MurNAc 6-phosphate, producing GlcNAc 6-phosphate and D-lactate. The polypeptide is N-acetylmuramic acid 6-phosphate etherase (Bacillus pumilus (strain SAFR-032)).